We begin with the raw amino-acid sequence, 899 residues long: Translation initiation factor IF-2 (899 aa).

Disordered stretches follow at residues lysine 31–glutamine 227 and valine 240–lysine 310. Composition is skewed to polar residues over residues asparagine 36–serine 47 and serine 73–valine 87. Basic and acidic residues-rich tracts occupy residues serine 101–lysine 173, alanine 181–glutamate 219, and arginine 247–glycine 261. Residues proline 296–phenylalanine 308 show a composition bias toward polar residues. The region spanning serine 398–glutamate 565 is the tr-type G domain. The tract at residues glycine 407 to threonine 414 is G1. Residue glycine 407–threonine 414 participates in GTP binding. Residues glycine 432–histidine 436 are G2. The G3 stretch occupies residues aspartate 453–glycine 456. GTP-binding positions include aspartate 453–histidine 457 and asparagine 507–aspartate 510. Residues asparagine 507–aspartate 510 are G4. The G5 stretch occupies residues serine 543–lysine 545.

It belongs to the TRAFAC class translation factor GTPase superfamily. Classic translation factor GTPase family. IF-2 subfamily.

The protein resides in the cytoplasm. Its function is as follows. One of the essential components for the initiation of protein synthesis. Protects formylmethionyl-tRNA from spontaneous hydrolysis and promotes its binding to the 30S ribosomal subunits. Also involved in the hydrolysis of GTP during the formation of the 70S ribosomal complex. In Photobacterium profundum (strain SS9), this protein is Translation initiation factor IF-2.